The following is a 241-amino-acid chain: DNA repair protein RecO (241 aa).

This sequence belongs to the RecO family.

Functionally, involved in DNA repair and RecF pathway recombination. This is DNA repair protein RecO from Ruegeria sp. (strain TM1040) (Silicibacter sp.).